Here is a 72-residue protein sequence, read N- to C-terminus: Prokaryotic ubiquitin-like protein Pup (72 aa).

Over residues 1–11 the composition is skewed to gly residues; the sequence is MAQRDTGGGQQ. Residues 1 to 41 form a disordered region; the sequence is MAQRDTGGGQQRTGRRDDETAEAEVEESGASDLKERHEKLS. The segment covering 19–29 has biased composition (acidic residues); the sequence is ETAEAEVEESG. Residues 22–61 adopt a coiled-coil conformation; that stretch reads EAEVEESGASDLKERHEKLSEDVDSLLDEIDDVLEENAEE. An ARC ATPase binding region spans residues 28 to 66; the sequence is SGASDLKERHEKLSEDVDSLLDEIDDVLEENAEEFVKGY. A compositionally biased stretch (basic and acidic residues) spans 32 to 41; the sequence is DLKERHEKLS. A Deamidated glutamine modification is found at Q72. Q72 participates in a covalent cross-link: Isoglutamyl lysine isopeptide (Gln-Lys) (interchain with K-? in acceptor proteins).

This sequence belongs to the prokaryotic ubiquitin-like protein family. Strongly interacts with the proteasome-associated ATPase ARC through a hydrophobic interface; the interacting region of Pup lies in its C-terminal half. There is one Pup binding site per ARC hexamer ring. In terms of processing, is modified by deamidation of its C-terminal glutamine to glutamate by the deamidase Dop, a prerequisite to the subsequent pupylation process.

It functions in the pathway protein degradation; proteasomal Pup-dependent pathway. Functionally, protein modifier that is covalently attached to lysine residues of substrate proteins, thereby targeting them for proteasomal degradation. The tagging system is termed pupylation. This Parafrankia sp. (strain EAN1pec) protein is Prokaryotic ubiquitin-like protein Pup.